A 162-amino-acid polypeptide reads, in one-letter code: Putative 4-hydroxy-4-methyl-2-oxoglutarate aldolase (162 aa).

Substrate contacts are provided by residues 75 to 78 and Arg97; that span reads GDML. Asp98 is a binding site for a divalent metal cation.

The protein belongs to the class II aldolase/RraA-like family. As to quaternary structure, homotrimer. A divalent metal cation serves as cofactor.

It catalyses the reaction 4-hydroxy-4-methyl-2-oxoglutarate = 2 pyruvate. It carries out the reaction oxaloacetate + H(+) = pyruvate + CO2. Functionally, catalyzes the aldol cleavage of 4-hydroxy-4-methyl-2-oxoglutarate (HMG) into 2 molecules of pyruvate. Also contains a secondary oxaloacetate (OAA) decarboxylase activity due to the common pyruvate enolate transition state formed following C-C bond cleavage in the retro-aldol and decarboxylation reactions. The sequence is that of Putative 4-hydroxy-4-methyl-2-oxoglutarate aldolase from Ectopseudomonas mendocina (strain ymp) (Pseudomonas mendocina).